Here is a 178-residue protein sequence, read N- to C-terminus: Small ribosomal subunit protein uS4 (178 aa).

Residues 104 to 166 (RRLQTLVYRK…PNSPMALENH (63 aa)) form the S4 RNA-binding domain.

This sequence belongs to the universal ribosomal protein uS4 family. In terms of assembly, part of the 30S ribosomal subunit. Contacts protein S5. The interaction surface between S4 and S5 is involved in control of translational fidelity.

In terms of biological role, one of the primary rRNA binding proteins, it binds directly to 16S rRNA where it nucleates assembly of the body of the 30S subunit. Its function is as follows. With S5 and S12 plays an important role in translational accuracy. The sequence is that of Small ribosomal subunit protein uS4 from Methanococcus vannielii (strain ATCC 35089 / DSM 1224 / JCM 13029 / OCM 148 / SB).